Here is a 76-residue protein sequence, read N- to C-terminus: DNA-directed RNA polymerase subunit epsilon (76 aa).

This sequence belongs to the RNA polymerase subunit epsilon family. RNAP is composed of a core of 2 alpha, a beta and a beta' subunit. The core is associated with a delta subunit, and at least one of epsilon or omega. When a sigma factor is associated with the core the holoenzyme is formed, which can initiate transcription.

The enzyme catalyses RNA(n) + a ribonucleoside 5'-triphosphate = RNA(n+1) + diphosphate. In terms of biological role, a non-essential component of RNA polymerase (RNAP). The chain is DNA-directed RNA polymerase subunit epsilon from Streptococcus pyogenes serotype M1.